Consider the following 551-residue polypeptide: DNA ligase (551 aa).

Glu246 is an ATP binding site. Lys248 serves as the catalytic N6-AMP-lysine intermediate. Residues Arg253, Arg268, Glu298, Phe337, Arg414, and Lys420 each contribute to the ATP site.

Belongs to the ATP-dependent DNA ligase family. Mg(2+) serves as cofactor.

It carries out the reaction ATP + (deoxyribonucleotide)n-3'-hydroxyl + 5'-phospho-(deoxyribonucleotide)m = (deoxyribonucleotide)n+m + AMP + diphosphate.. Its function is as follows. DNA ligase that seals nicks in double-stranded DNA during DNA replication, DNA recombination and DNA repair. This is DNA ligase from Methanobrevibacter smithii (strain ATCC 35061 / DSM 861 / OCM 144 / PS).